A 212-amino-acid chain; its full sequence is Pyrrolidone-carboxylate peptidase (212 aa).

Active-site residues include Glu-80, Cys-143, and His-165.

This sequence belongs to the peptidase C15 family. In terms of assembly, homotetramer.

It is found in the cytoplasm. It catalyses the reaction Release of an N-terminal pyroglutamyl group from a polypeptide, the second amino acid generally not being Pro.. Removes 5-oxoproline from various penultimate amino acid residues except L-proline. The polypeptide is Pyrrolidone-carboxylate peptidase (Vibrio campbellii (strain ATCC BAA-1116)).